A 248-amino-acid polypeptide reads, in one-letter code: Metallo-beta-lactamase type 2 (248 aa).

A signal peptide spans 1-21 (MKGLKGLLVLALGFTGLQVFG). Positions 97, 99, 101, 160, and 179 each coordinate Zn(2+). Substrate is bound at residue Lys-182. A Zn(2+)-binding site is contributed by His-221.

The protein belongs to the metallo-beta-lactamase superfamily. Class-B beta-lactamase family. As to quaternary structure, monomer. The cofactor is Zn(2+).

Its subcellular location is the periplasm. The enzyme catalyses a beta-lactam + H2O = a substituted beta-amino acid. In terms of biological role, confers resistance to the different beta-lactams antibiotics (penicillin, cephalosporin and carbapenem) via the hydrolysis of the beta-lactam ring. The protein is Metallo-beta-lactamase type 2 (blaB8) of Elizabethkingia meningoseptica (Chryseobacterium meningosepticum).